The primary structure comprises 765 residues: Protein transport protein Sec23A (765 aa).

Cys61, Cys66, Cys85, and Cys88 together coordinate Zn(2+). Residues 632 to 718 (PEPVLLDSSS…EHGGSQARFL (87 aa)) form a Gelsolin-like repeat.

This sequence belongs to the SEC23/SEC24 family. SEC23 subfamily. As to quaternary structure, COPII is composed of at least five proteins: the Sec23/24 complex, the Sec13/31 complex and Sar1.

The protein localises to the cytoplasmic vesicle. It is found in the COPII-coated vesicle membrane. The protein resides in the endoplasmic reticulum membrane. It localises to the cytoplasm. Its subcellular location is the cytosol. Its function is as follows. Component of the coat protein complex II (COPII) which promotes the formation of transport vesicles from the endoplasmic reticulum (ER). The coat has two main functions, the physical deformation of the endoplasmic reticulum membrane into vesicles and the selection of cargo molecules for their transport to the Golgi complex. In Danio rerio (Zebrafish), this protein is Protein transport protein Sec23A.